The chain runs to 239 residues: Protein GrpE (239 aa).

Disordered stretches follow at residues 1-50 (MIEN…INTE) and 209-239 (MGHG…SEDV). The span at 16 to 30 (VLNQDNAPEDNSSAA) shows a compositional bias: polar residues. The span at 218-239 (EEVEKDTVEEDIDSEENTSEDV) shows a compositional bias: acidic residues.

The protein belongs to the GrpE family. As to quaternary structure, homodimer.

Its subcellular location is the cytoplasm. Participates actively in the response to hyperosmotic and heat shock by preventing the aggregation of stress-denatured proteins, in association with DnaK and GrpE. It is the nucleotide exchange factor for DnaK and may function as a thermosensor. Unfolded proteins bind initially to DnaJ; upon interaction with the DnaJ-bound protein, DnaK hydrolyzes its bound ATP, resulting in the formation of a stable complex. GrpE releases ADP from DnaK; ATP binding to DnaK triggers the release of the substrate protein, thus completing the reaction cycle. Several rounds of ATP-dependent interactions between DnaJ, DnaK and GrpE are required for fully efficient folding. This Prochlorococcus marinus (strain MIT 9312) protein is Protein GrpE.